The chain runs to 336 residues: Phospholipase A1 (336 aa).

Positions Met1–Gly27 are cleaved as a signal peptide. The propeptide occupies Asp28–Arg36. An intrachain disulfide couples Cys40 to Cys123. Catalysis depends on Ser173, which acts as the Nucleophile. Catalysis depends on Asp201, which acts as the Charge relay system. 2 disulfide bridges follow: Cys212-Cys217 and Cys255-Cys263. His265 serves as the catalytic Charge relay system. Cystine bridges form between Cys280/Cys304, Cys281/Cys329, and Cys297/Cys302.

This sequence belongs to the AB hydrolase superfamily. Lipase family. In terms of tissue distribution, expressed by the venom gland.

It is found in the secreted. It catalyses the reaction a 1,2-diacyl-sn-glycero-3-phosphocholine + H2O = a 2-acyl-sn-glycero-3-phosphocholine + a fatty acid + H(+). Its function is as follows. Catalyzes the hydrolysis of phosphatidylcholine with phospholipase A1 activity. Induces hemolytic activity. Acts as an allergen. This is Phospholipase A1 from Vespula vulgaris (Yellow jacket).